Consider the following 126-residue polypeptide: Anti-adapter protein IraD (126 aa).

The protein belongs to the GpW/Gp25 family. IraD subfamily. As to quaternary structure, interacts with RssB.

It localises to the cytoplasm. Its function is as follows. Inhibits RpoS proteolysis by regulating RssB activity, thereby increasing the stability of the sigma stress factor RpoS during oxidative stress. Its effect on RpoS stability is due to its interaction with RssB, which probably blocks the interaction of RssB with RpoS, and the consequent delivery of the RssB-RpoS complex to the ClpXP protein degradation pathway. This is Anti-adapter protein IraD from Salmonella arizonae (strain ATCC BAA-731 / CDC346-86 / RSK2980).